The following is a 284-amino-acid chain: Tropomyosin alpha-1 chain (284 aa).

Positions 1–38 are disordered; that stretch reads MDAIKKKMQMLKLDKENALDRAEQAEADKKAAEERSKQ. The stretch at 1 to 284 forms a coiled coil; it reads MDAIKKKMQM…DHALNDMTSI (284 aa). Basic and acidic residues predominate over residues 12-38; the sequence is KLDKENALDRAEQAEADKKAAEERSKQ.

Belongs to the tropomyosin family. Homodimer. Heterodimer of an alpha (TPM1, TPM3 or TPM4) and a beta (TPM2) chain. Interacts with HRG (via the HRR domain); the interaction contributes to the antiangiogenic properties of the histidine/proline-rich region (HRR) of HRG.

The protein localises to the cytoplasm. The protein resides in the cytoskeleton. Binds to actin filaments in muscle and non-muscle cells. Plays a central role, in association with the troponin complex, in the calcium dependent regulation of vertebrate striated muscle contraction. Smooth muscle contraction is regulated by interaction with caldesmon. In non-muscle cells is implicated in stabilizing cytoskeleton actin filaments. This Coturnix japonica (Japanese quail) protein is Tropomyosin alpha-1 chain (TPM1).